The sequence spans 271 residues: Phosphate import ATP-binding protein PstB (271 aa).

In terms of domain architecture, ABC transporter spans 24-266; the sequence is MIGNDVSVYY…PDDQRTQDYI (243 aa). 56-63 is a binding site for ATP; the sequence is GPSGCGKS.

The protein belongs to the ABC transporter superfamily. Phosphate importer (TC 3.A.1.7) family. As to quaternary structure, the complex is composed of two ATP-binding proteins (PstB), two transmembrane proteins (PstC and PstA) and a solute-binding protein (PstS).

The protein localises to the cell inner membrane. The enzyme catalyses phosphate(out) + ATP + H2O = ADP + 2 phosphate(in) + H(+). Functionally, part of the ABC transporter complex PstSACB involved in phosphate import. Responsible for energy coupling to the transport system. The protein is Phosphate import ATP-binding protein PstB of Rhizobium meliloti (strain 1021) (Ensifer meliloti).